The primary structure comprises 94 residues: UPF0213 protein BH0048 (94 aa).

The 76-residue stretch at 1-76 folds into the GIY-YIG domain; the sequence is MNHYVYILEC…KHLSRRKKEQ (76 aa).

The protein belongs to the UPF0213 family.

In Halalkalibacterium halodurans (strain ATCC BAA-125 / DSM 18197 / FERM 7344 / JCM 9153 / C-125) (Bacillus halodurans), this protein is UPF0213 protein BH0048.